Reading from the N-terminus, the 216-residue chain is Kynurenine formamidase (216 aa).

Position 25 (tryptophan 25) interacts with substrate. Positions 55, 59, and 61 each coordinate Zn(2+). Histidine 65 serves as the catalytic Proton donor/acceptor. 2 residues coordinate Zn(2+): histidine 167 and glutamate 179.

It belongs to the Cyclase 1 superfamily. KynB family. Homodimer. Zn(2+) serves as cofactor.

It carries out the reaction N-formyl-L-kynurenine + H2O = L-kynurenine + formate + H(+). It functions in the pathway amino-acid degradation; L-tryptophan degradation via kynurenine pathway; L-kynurenine from L-tryptophan: step 2/2. Its function is as follows. Catalyzes the hydrolysis of N-formyl-L-kynurenine to L-kynurenine, the second step in the kynurenine pathway of tryptophan degradation. The chain is Kynurenine formamidase from Cupriavidus taiwanensis (strain DSM 17343 / BCRC 17206 / CCUG 44338 / CIP 107171 / LMG 19424 / R1) (Ralstonia taiwanensis (strain LMG 19424)).